Reading from the N-terminus, the 497-residue chain is Cytochrome P450 2D19 (497 aa).

C443 lines the heme pocket.

It belongs to the cytochrome P450 family. It depends on heme as a cofactor.

It is found in the endoplasmic reticulum membrane. The protein localises to the microsome membrane. The catalysed reaction is an organic molecule + reduced [NADPH--hemoprotein reductase] + O2 = an alcohol + oxidized [NADPH--hemoprotein reductase] + H2O + H(+). In terms of biological role, responsible for the metabolism of many drugs and environmental chemicals that it oxidizes. The sequence is that of Cytochrome P450 2D19 (CYP2D19) from Callithrix jacchus (White-tufted-ear marmoset).